The following is a 361-amino-acid chain: Uroporphyrinogen decarboxylase (361 aa).

Residues 44–48, Asp-93, Tyr-168, Ser-223, and His-337 contribute to the substrate site; that span reads RQAGR.

This sequence belongs to the uroporphyrinogen decarboxylase family. As to quaternary structure, homodimer.

It localises to the cytoplasm. It carries out the reaction uroporphyrinogen III + 4 H(+) = coproporphyrinogen III + 4 CO2. It functions in the pathway porphyrin-containing compound metabolism; protoporphyrin-IX biosynthesis; coproporphyrinogen-III from 5-aminolevulinate: step 4/4. Its function is as follows. Catalyzes the decarboxylation of four acetate groups of uroporphyrinogen-III to yield coproporphyrinogen-III. The protein is Uroporphyrinogen decarboxylase of Thermobifida fusca (strain YX).